The chain runs to 108 residues: Protein SMALL AUXIN UP-REGULATED RNA 51 (108 aa).

It belongs to the ARG7 family. Expressed in organ primordia. Hardly observed in leaves.

Its subcellular location is the cell membrane. Functionally, provide a mechanistic link between auxin and plasma membrane H(+)-ATPases (PM H(+)-ATPases, e.g. AHA1 and AHA2), and triggers PM H(+)-ATPases activity by promoting phosphorylation of their C-terminal autoinhibitory domain as a result of PP2C-D subfamily of type 2C phosphatases inhibition, thus leading to the acidification of the apoplast and the facilitation of solutes and water uptake to drive cell expansion. Triggers plant growth probably by promoting cell elongation. Regulates branch angles and bending. In Arabidopsis thaliana (Mouse-ear cress), this protein is Protein SMALL AUXIN UP-REGULATED RNA 51.